Reading from the N-terminus, the 130-residue chain is Small ribosomal subunit protein uS8 (130 aa).

The protein belongs to the universal ribosomal protein uS8 family. As to quaternary structure, part of the 30S ribosomal subunit. Contacts proteins S5 and S12.

Functionally, one of the primary rRNA binding proteins, it binds directly to 16S rRNA central domain where it helps coordinate assembly of the platform of the 30S subunit. The protein is Small ribosomal subunit protein uS8 of Phytoplasma australiense.